A 246-amino-acid chain; its full sequence is 3-oxoacyl-[acyl-carrier-protein] reductase FabG (246 aa).

Residues 11-14, serine 36, 62-63, and asparagine 89 each bind NADP(+); these read GASR and DV. A substrate-binding site is contributed by serine 141. Residue tyrosine 154 is the Proton acceptor of the active site. NADP(+) contacts are provided by residues 154-158 and isoleucine 187; that span reads YVAAK.

This sequence belongs to the short-chain dehydrogenases/reductases (SDR) family. In terms of assembly, homotetramer.

The catalysed reaction is a (3R)-hydroxyacyl-[ACP] + NADP(+) = a 3-oxoacyl-[ACP] + NADPH + H(+). Its pathway is lipid metabolism; fatty acid biosynthesis. In terms of biological role, catalyzes the NADPH-dependent reduction of beta-ketoacyl-ACP substrates to beta-hydroxyacyl-ACP products, the first reductive step in the elongation cycle of fatty acid biosynthesis. In Bacillus subtilis (strain 168), this protein is 3-oxoacyl-[acyl-carrier-protein] reductase FabG (fabG).